An 818-amino-acid chain; its full sequence is Sodium/hydrogen exchanger 1 (818 aa).

The Extracellular portion of the chain corresponds to 1-98 (MLLWPGASGL…FPVLGIDYQH (98 aa)). Residues 44-76 (STIRGSEPPRERSIGDVTTAPPELAPESRPVNH) form a disordered region. Asn75 carries an N-linked (GlcNAc...) asparagine glycan. A helical membrane pass occupies residues 99 to 121 (VRIPFEIALWILLACLMKIGFHV). At 122 to 130 (IPTISSIVP) the chain is on the cytoplasmic side. The helical transmembrane segment at 131-148 (ESCLLIVVGLLVGGLIKG) threads the bilayer. The Extracellular segment spans residues 149-158 (VGETPPILQS). Residues 159–176 (EVFFLFLLPPIILDAGYF) traverse the membrane as a helical segment. Topologically, residues 177 to 186 (LPLRQFTENL) are cytoplasmic. Residues 187-215 (GTILIFAVVGTLWNAFFLGGLMYAVCLVG) form a helical membrane-spanning segment. The Extracellular portion of the chain corresponds to 216 to 222 (GEQINNI). The chain crosses the membrane as a helical span at residues 223-249 (GLLENLLFGSIISAVDPVAVLAVFEEI). Over 250-252 (HIN) the chain is Cytoplasmic. A helical membrane pass occupies residues 253–283 (ELLHILVFGESLLNDAVTVVLYHLFEEFANY). Residues 284–287 (DRVG) lie on the Extracellular side of the membrane. A helical membrane pass occupies residues 288–322 (IVDIILGFLSFFVVSLGGVFVGVVYGVIAAFTSRF). Topologically, residues 323–328 (TSHIRV) are cytoplasmic. The helical transmembrane segment at 329–341 (IEPLFVFLYSYMA) threads the bilayer. The Extracellular portion of the chain corresponds to 342 to 350 (YLSAELFHL). A helical membrane pass occupies residues 351-371 (SGIMALIASGVVMRPYVEANI). Residues 372 to 373 (SH) are Cytoplasmic-facing. Residues 374–404 (KSHTTIKYFLKMWSSVSETLIFIFLGVSTVA) traverse the membrane as a helical segment. At 405–410 (GSHHWN) the chain is on the extracellular side. The helical transmembrane segment at 411–438 (WTFVISTLLFCLIARVLGVLGLTWFINK) threads the bilayer. The Cytoplasmic segment spans residues 439 to 444 (FRIVKL). The chain crosses the membrane as a helical span at residues 445-469 (TPKDQFIIAYGGLRGAIAFSLGYLL). Residues 470-475 (DKKHFP) are Extracellular-facing. Residues 476-505 (MCDLFLTAIITVIFFTVFVQGMTIRPLVDL) form a helical membrane-spanning segment. The segment at 503-545 (VDLLAVKKKQETKRSINEEIHTQFLDHLLTGIEDICGHYGHHH) is interaction with TESC. Residues 506-818 (LAVKKKQETK…EGEPFIPKGQ (313 aa)) are Cytoplasmic-facing. Residues 509–516 (KKKQETKR) form a PI(4,5)P2-binding region region. The tract at residues 515 to 545 (KRSINEEIHTQFLDHLLTGIEDICGHYGHHH) is interaction with CHP2. Residues 540-545 (HYGHHH) form a confers pH-dependent PI(4,5)P2 binding region. The interval 552-560 (RFNKKYVKK) is PI(4,5)P2-binding region. Phosphoserine is present on residues Ser599 and Ser602. Residue Thr603 is modified to Phosphothreonine. A phosphoserine mark is found at Ser605 and Ser648. Residues 633–818 (KILRNNLQKT…EGEPFIPKGQ (186 aa)) are interaction with TESC. An interaction with CALM1 region spans residues 633–818 (KILRNNLQKT…EGEPFIPKGQ (186 aa)). The interval 684 to 687 (LTVP) is interaction with PPP3CA. Residues Ser693, Ser697, and Ser703 each carry the phosphoserine modification. The interaction with PPP3CA stretch occupies residues 715–720 (PVITID). Phosphoserine is present on residues Ser723, Ser726, and Ser729. Residues 741-818 (VLGLSRDPGR…EGEPFIPKGQ (78 aa)) form a disordered region. Thr782 carries the post-translational modification Phosphothreonine. Polar residues predominate over residues 785–794 (PSDSPSSQRI). Residues Ser788, Ser790, and Ser799 each carry the phosphoserine modification.

Belongs to the monovalent cation:proton antiporter 1 (CPA1) transporter (TC 2.A.36) family. Homodimer; dimerization is crucial for its function. Oligomer. Interacts with CALM in a calcium-dependent manner. Interacts with TESC. Interacts (via the juxtamembrane region of the cytoplasmic C-terminal domain) with CHP1; the interaction occurs at the plasma membrane in a calcium-dependent manner. Interacts with CHP2; the interaction occurs in a calcium-dependent manner. Interacts with EZR; regulates the cytoskeletal interactions of SLC9A1 and promotes stress fiber formation. Ubiquitinated, leading to its degradation by the proteasome. Ubiquitination is reduced by CHP1. Post-translationally, O-glycosylated. In terms of processing, palmitoylated; may play a major role in SLC9A1 regulation. Phosphorylation at Thr-782 increases SLC9A1 activity. Specifically dephosphorylated at Thr-782 by PPP3CA that negatively regulates SLC9A1 activity. Phosphorylation at Ser-648 by AKT1 reduces SLC9A1 binding to CALM1.

It localises to the cell membrane. It is found in the basolateral cell membrane. The enzyme catalyses Na(+)(in) + H(+)(out) = Na(+)(out) + H(+)(in). It carries out the reaction Li(+)(out) + H(+)(in) = Li(+)(in) + H(+)(out). The catalysed reaction is Li(+)(in) + Na(+)(out) = Li(+)(out) + Na(+)(in). Activated at acidic pHs. Inhibited by amiloride and 5-amino-substituted derivatives. Inhibited by cariporide and eniporide. Phosphatidylinositol 4,5-bisphosphate (PI(4,5)P2) and phosphatidylinositol 3,4,5-trisphosphate (PI(3,4,5)P3) bind and differentially regulate SLC9A1 activity. Electroneutral Na(+) /H(+) antiporter that extrudes Na(+) in exchange for external protons driven by the inward sodium ion chemical gradient, protecting cells from acidification that occurs from metabolism. Exchanges intracellular H(+) ions for extracellular Na(+) in 1:1 stoichiometry. Plays a key role in maintening intracellular pH neutral and cell volume, and thus is important for cell growth, proliferation, migration and survival. In addition, can transport lithium Li(+) and also functions as a Na(+)/Li(+) antiporter. SLC9A1 also functions in membrane anchoring and organization of scaffolding complexes that coordinate signaling inputs. The polypeptide is Sodium/hydrogen exchanger 1 (SLC9A1) (Bos taurus (Bovine)).